A 697-amino-acid chain; its full sequence is MMRNRSKSPRRPSPTSRAANCDVELLKSTARDREELKCMLEKYERHLAEIQGNVKVLTSERDKTFLLYEQAQEEIARLRREMMKSCKSPKSTTAHAILRRVETERDVAFTDLRRMTTERDSLRERLKIAQETAFNEKAHLEQRIEELECTVHNLDDERMEQMANMTLMKETITTVEKEMKSLARKAMDTESELGRQKAENNSLRLLYENTEKDLSDTQRHLAKKKYELQLTQEKIMCLDEKIDNFTRQNIAQREEISILGATLNDLAKEKECLQACLDKKSENIASLGESLAMKEKTISGMKNIIAEMEQASRQSTEALIMCEQDISRMRRQLDETNDELGQIARERDILAHENDNLQEQFAKVKQENQALSKKLNDTHNELSDIKQKVQDTNLEVNKLKNILKSEESENRQIMEQLRKANEDAENWENKARQTEAENNTLKLELITAEAEGNRLKEKVDALNREVEQHLNAERSYKSQIATLHKSLVKMEEELQKVQFEKVSALADLSSTRELCIKLDSSKELLNRQLVAKDQEIEMMENELDSARSEIELLRSQMTNERISMQNLEALLVANRDKEYQSQIALQEKESEIQLLKEHLCLAENKMAIQSRDVAQFRNVVTQLEADLDITKRQLGTERFERERAVQELRRQNYSSNAYNLGPMKPNTKCHSPERAHHRSPDRGLDRSLEENLCYRDF.

The segment at 556 to 688 (QMTNERISMQ…SPDRGLDRSL (133 aa)) is interaction with HIF1A. Positions 656-684 (NAYNLGPMKPNTKCHSPERAHHRSPDRGL) are disordered. Residues 670-684 (HSPERAHHRSPDRGL) are compositionally biased toward basic and acidic residues. Ser687 bears the Phosphoserine mark.

Belongs to the CEP135/TSGA10 family. As to quaternary structure, interacts with HIF1A. Post-translationally, processed into N-terminal 27-kDa and C-terminal 55-kDa fragments. In terms of tissue distribution, predominantly expressed in testis, in spermatozoa (at protein level). Not detected in Leydig cells. The N-terminal 27-kDa fragment is also detected in liver, while the C-terminal 55-kDa fragment is also found retina, brain and kidney (at protein level).

It localises to the cytoplasm. It is found in the cytoskeleton. The protein localises to the microtubule organizing center. The protein resides in the centrosome. Its subcellular location is the centriole. Functionally, plays a role in spermatogenesis. When overexpressed, prevents nuclear localization of HIF1A. The sequence is that of Testis-specific gene 10 protein (Tsga10) from Mus musculus (Mouse).